Reading from the N-terminus, the 482-residue chain is Zinc metalloproteinase/disintegrin (482 aa).

The signal sequence occupies residues 1–20; that stretch reads MIQVLLVTICLAAFPYQGSS. Positions 21–189 are excised as a propeptide; it reads MILESGNVND…IKASQLVVTA (169 aa). Positions 197 to 393 constitute a Peptidase M12B domain; sequence RYIELVVVAD…HNPQCILNEP (197 aa). 2 residues coordinate Ca(2+): glutamate 200 and aspartate 284. 2 cysteine pairs are disulfide-bonded: cysteine 308–cysteine 388 and cysteine 348–cysteine 372. Histidine 333 lines the Zn(2+) pocket. Residue glutamate 334 is part of the active site. Residues histidine 337 and histidine 343 each contribute to the Zn(2+) site. Positions 388 and 391 each coordinate Ca(2+). A propeptide spanning residues 394–409 is cleaved from the precursor; that stretch reads LRTDTVSTPVSGNELL. Residues 401 to 482 form the Disintegrin domain; sequence TPVSGNELLE…AGCPRNPFHA (82 aa). Cystine bridges form between cysteine 415/cysteine 430, cysteine 417/cysteine 425, cysteine 424/cysteine 447, cysteine 438/cysteine 444, cysteine 443/cysteine 468, and cysteine 456/cysteine 475. A Cell attachment site motif is present at residues 460–462; the sequence is RGD.

It belongs to the venom metalloproteinase (M12B) family. P-II subfamily. P-IId sub-subfamily. In terms of assembly, homodimer; disulfide-linked (disintegrin). Requires Zn(2+) as cofactor. As to expression, expressed by the venom gland.

It localises to the secreted. Its function is as follows. This recombinant protein hydrolyzes fibronectin, but has no effect on type I gelatin and type I to V collagens. Selectively hydrolyzes the Aalpha-chain of fibrinogen (FGA), but has no effect on fibrin. Functionally, inhibits ADP-induced platelet aggregation. Recombinant metalloproteinase-disintegrin Mt-d-I (393-408): hydrolyzes type I gelatin, type III and V collagens, but has no effect on type I, II, IV collagens and fibronectin. Selectively hydrolyzes the Aalpha-chain of fibrinogen, but has no effect on fibrin. May induce hemorrhage in vascular tissue. Strongly inhibits ADP-induced platelet aggregation. When concentrated, Mt-d-I undergoes autoproteolytic processing into metalloproteinase and disintegrin. This is Zinc metalloproteinase/disintegrin from Gloydius brevicauda (Korean slamosa snake).